The primary structure comprises 833 residues: DNA polymerase I, thermostable (833 aa).

In terms of domain architecture, 5'-3' exonuclease spans 173–267 (VPPERWVDFR…FKALRRRTPD (95 aa)). Residues 412-833 (ERLFQNLFPR…GRDWLEAKQD (422 aa)) are polymerase.

It belongs to the DNA polymerase type-A family.

The enzyme catalyses DNA(n) + a 2'-deoxyribonucleoside 5'-triphosphate = DNA(n+1) + diphosphate. Its function is as follows. In addition to polymerase activity, this DNA polymerase exhibits 5'-3' exonuclease activity. Unlikely to have 3'-5' exonuclease activity due to absence of a 3'-5' exonuclease domain. The sequence is that of DNA polymerase I, thermostable (polA) from Thermus filiformis.